The following is a 218-amino-acid chain: N-(5'-phosphoribosyl)anthranilate isomerase (218 aa).

Belongs to the TrpF family.

It carries out the reaction N-(5-phospho-beta-D-ribosyl)anthranilate = 1-(2-carboxyphenylamino)-1-deoxy-D-ribulose 5-phosphate. Its pathway is amino-acid biosynthesis; L-tryptophan biosynthesis; L-tryptophan from chorismate: step 3/5. The polypeptide is N-(5'-phosphoribosyl)anthranilate isomerase (Rhodopseudomonas palustris (strain BisA53)).